The following is a 72-amino-acid chain: NADH dehydrogenase [ubiquinone] 1 beta subcomplex subunit 3-A (72 aa).

Residues 31–48 traverse the membrane as a helical segment; that stretch reads ALPGIGIGVGAFCVYLVG.

It belongs to the complex I NDUFB3 subunit family. Complex I is composed of at least 49 different subunits.

The protein localises to the mitochondrion inner membrane. Its function is as follows. Accessory subunit of the mitochondrial membrane respiratory chain NADH dehydrogenase (Complex I), that is believed not to be involved in catalysis. Complex I functions in the transfer of electrons from NADH to the respiratory chain. The immediate electron acceptor for the enzyme is believed to be ubiquinone. The sequence is that of NADH dehydrogenase [ubiquinone] 1 beta subcomplex subunit 3-A from Arabidopsis thaliana (Mouse-ear cress).